The sequence spans 861 residues: Protein argonaute-4 (861 aa).

One can recognise a PAZ domain in the interval 219 to 338; sequence PIIEFMCEVL…LPLEVCNIVA (120 aa). A Piwi domain is found at 509 to 820; sequence LIVVILPGKT…VAFRARYHLV (312 aa). The disordered stretch occupies residues 825-846; sequence DSAEGSHVSGQSNGRDPQALAK.

The protein belongs to the argonaute family. Ago subfamily. In terms of assembly, interacts with EIF4B, IMP8, PRMT5, TNRC6A and TNRC6B. Interacts with ZFP36. In terms of processing, ubiquitinated on surface-exposed lysines by a SCF-like E3 ubiquitin-protein ligase complex containing ZSWIM8 during target-directed microRNA degradation (TDMD), a process that mediates degradation of microRNAs (miRNAs). Ubiquitination by the SCF-like E3 ubiquitin-protein ligase complex containing ZSWIM8 leads to its subsequent degradation, thereby exposing miRNAs for degradation. ZSWIM8 recognizes and binds AGO4 when it is engaged with a TDMD target.

The protein localises to the cytoplasm. Its subcellular location is the P-body. Its function is as follows. Required for RNA-mediated gene silencing (RNAi). Binds to short RNAs such as microRNAs (miRNAs) and represses the translation of mRNAs which are complementary to them. Lacks endonuclease activity and does not appear to cleave target mRNAs. The sequence is that of Protein argonaute-4 (Ago4) from Mus musculus (Mouse).